A 510-amino-acid polypeptide reads, in one-letter code: GMP synthase [glutamine-hydrolyzing] (510 aa).

The 191-residue stretch at 5–195 folds into the Glutamine amidotransferase type-1 domain; it reads MIVVLDFGSQ…VFEVCGCRGD (191 aa). Cysteine 82 serves as the catalytic Nucleophile. Active-site residues include histidine 169 and glutamate 171. In terms of domain architecture, GMPS ATP-PPase spans 196–385; it reads WTMENFIDEQ…LGIPDEIVWR (190 aa). Position 223 to 229 (223 to 229) interacts with ATP; sequence SGGVDSS.

As to quaternary structure, homodimer.

The enzyme catalyses XMP + L-glutamine + ATP + H2O = GMP + L-glutamate + AMP + diphosphate + 2 H(+). It functions in the pathway purine metabolism; GMP biosynthesis; GMP from XMP (L-Gln route): step 1/1. Its function is as follows. Catalyzes the synthesis of GMP from XMP. In Geobacillus kaustophilus (strain HTA426), this protein is GMP synthase [glutamine-hydrolyzing].